Consider the following 1161-residue polypeptide: Perforin-like protein 1 (1161 aa).

The chain crosses the membrane as a helical span at residues 67-86 (LWITFVCLLTLHMFGLSSAV). The disordered stretch occupies residues 154–329 (PEALNEVPTK…LGDSSALDLF (176 aa)). 2 stretches are compositionally biased toward basic and acidic residues: residues 162–177 (TKVERNEFTEKGDKTE) and 184–194 (ADHKSLLEGRS). The segment covering 201-211 (PDDDFDFLFED) has biased composition (acidic residues). The span at 222 to 234 (NKGTSSDETSPGD) shows a compositional bias: polar residues. Over residues 238-249 (GEGSSASDSLLS) the composition is skewed to low complexity. Asn-257 is a glycosylation site (N-linked (GlcNAc...) asparagine). The segment covering 264–283 (NQKRITHPKSKAQHQKKVTK) has biased composition (basic residues). Residues 309-322 (NTQADDSQRQSLGD) show a composition bias toward polar residues. Asn-344 carries an N-linked (GlcNAc...) asparagine glycan. A disordered region spans residues 353–381 (AANDGGLFSSSGMGPTGASDETSANPLGS). Polar residues predominate over residues 361-378 (SSSGMGPTGASDETSANP). The MACPF domain occupies 463 to 817 (LSAVYTKATK…LTPQDLSALT (355 aa)). A disulfide bridge connects residues Cys-539 and Cys-602. An N-linked (GlcNAc...) asparagine glycan is attached at Asn-550. Residues 554–589 (YQNELSVDASLQGGDPIGLNSFSASTGYRDFAKEVS) form a beta stranded membrane-spanning segment. N-linked (GlcNAc...) asparagine glycosylation occurs at Asn-618. Cysteines 643 and 657 form a disulfide. A beta stranded transmembrane segment spans residues 694–740 (RSEVEKMRNMGIDVKTQLKMQLGGVSGGAGQGTSSKKNQSSSEYQMN). Positions 716 to 736 (GGVSGGAGQGTSSKKNQSSSE) are disordered. N-linked (GlcNAc...) asparagine glycosylation is present at Asn-755. Disulfide bonds link Cys-845/Cys-900, Cys-874/Cys-881, Cys-928/Cys-981, Cys-957/Cys-964, Cys-1019/Cys-1080, and Cys-1047/Cys-1054. Asn-1022, Asn-1050, and Asn-1111 each carry an N-linked (GlcNAc...) asparagine glycan. Residues 1094-1149 (VGKAKGNGKKKKGKKGKNKTNAPNEVEEGQQLGADSPSQVSVPADADSGPTSKTMS) are disordered. A compositionally biased stretch (basic residues) spans 1099–1111 (GNGKKKKGKKGKN).

This sequence belongs to the MPEG1 family. As to quaternary structure, homooligomer; forms a homooligomeric pore.

The protein localises to the parasitophorous vacuole membrane. The protein resides in the cytoplasmic vesicle. It localises to the secretory vesicle. Its subcellular location is the microneme membrane. Functionally, pore-forming protein that promotes parasite exit from host cells: mediates formation of a pore in the parasitophorous vacuolar membrane, leading to membrane permeabilization, thereby facilitating parasite egress from host cells. May also form a pore in the host plasma membrane. Preferentially binds inner leaflet lipids, such as phosphatidylethanolamine (PE) or phosphatidylserine (PS). The polypeptide is Perforin-like protein 1 (Toxoplasma gondii (strain ATCC 50861 / VEG)).